The sequence spans 196 residues: Large ribosomal subunit protein uL10 (196 aa).

The interval 163–196 (GAPAAAEAPAAEEAPAAEAAETEAPAEAAATEEN) is disordered. A compositionally biased stretch (low complexity) spans 164–196 (APAAAEAPAAEEAPAAEAAETEAPAEAAATEEN).

This sequence belongs to the universal ribosomal protein uL10 family. As to quaternary structure, part of the ribosomal stalk of the 50S ribosomal subunit. The N-terminus interacts with L11 and the large rRNA to form the base of the stalk. The C-terminus forms an elongated spine to which L12 dimers bind in a sequential fashion forming a multimeric L10(L12)X complex.

In terms of biological role, forms part of the ribosomal stalk, playing a central role in the interaction of the ribosome with GTP-bound translation factors. The polypeptide is Large ribosomal subunit protein uL10 (Arthrobacter sp. (strain FB24)).